We begin with the raw amino-acid sequence, 247 residues long: Capsid protein (247 aa).

The DNA-binding stretch occupies residues Met1–Arg40. A nuclear localization signals region spans residues Arg15–Thr44.

The protein belongs to the circoviridae capsid protein family. As to quaternary structure, homomultimer. Assembles in the nucleus, presumably in an immature form, then migrates to the cytoplasm once assembled as mature virion. Interacts with Rep; this interaction relocates Rep into the nucleus.

The protein localises to the host nucleus. It localises to the virion. In terms of biological role, self-assembles to form the virion icosahedral capsid with a T=1 symmetry. This very small capsid (17 - 22 nm in diameter) allows the virus to be very stable in the environment and resistant to some disinfectants, including detergents. Essential for the initial attachment to heparan sulfate moieties and chondroitin sulfate B of the host cell surface proteoglycans. After attachment, the virus is endocytosed and traffics to the nucleus. The capsid protein binds and transports the viral genome and Rep across the nuclear envelope. This is Capsid protein (Cap) from Beak and feather disease virus (BFDV).